Consider the following 179-residue polypeptide: Protein HEADING DATE 3A (179 aa).

This sequence belongs to the phosphatidylethanolamine-binding protein family. In terms of tissue distribution, expressed in the inner region of the SAM, stem and leaf blade vascular tissues (at protein level).

The protein localises to the cytoplasm. It is found in the nucleus. Probable mobile flower-promoting signal (florigen) that moves from the leaf to the shoot apical meristem (SAM) and induces flowering. Promotes the transition from vegetative growth to flowering downstream of HD1 and EHD1 under short day (SD) conditions. Acts upstream of MADS14 and MADS15. The protein is Protein HEADING DATE 3A (HD3A) of Oryza sativa subsp. japonica (Rice).